Here is a 137-residue protein sequence, read N- to C-terminus: U6 snRNA-associated Sm-like protein LSm4 (137 aa).

Met1 is subject to N-acetylmethionine. In terms of domain architecture, Sm spans 2–75 (LPLSLLKTAQ…IKYLRIPDEI (74 aa)). Residues 82-137 (EAAKGRGRGGPQQKQQKGRGMGGAGRGVFGGRGRGGIPGAGRGQPEKKPGRQAGKQ) are disordered. Residues 100-123 (RGMGGAGRGVFGGRGRGGIPGAGR) show a composition bias toward gly residues.

This sequence belongs to the snRNP Sm proteins family. Component of the precatalytic spliceosome (spliceosome B complex). Component of the U4/U6-U5 tri-snRNP complex, a building block of the precatalytic spliceosome (spliceosome B complex). The U4/U6-U5 tri-snRNP complex is composed of the U4, U6 and U5 snRNAs and at least PRPF3, PRPF4, PRPF6, PRPF8, PRPF31, SNRNP200, TXNL4A, SNRNP40, SNRPB, SNRPD1, SNRPD2, SNRPD3, SNRPE, SNRPF, SNRPG, DDX23, CD2BP2, PPIH, SNU13, EFTUD2, SART1 and USP39, plus LSM2, LSM3, LSM4, LSM5, LSM6, LSM7 and LSM8. LSM2, LSM3, LSM4, LSM5, LSM6, LSM7 and LSM8 form a heptameric, ring-shaped subcomplex (the LSM2-8 complex) that is part of the U4/U6-U5 tri-snRNP complex and the precatalytic spliceosome. As to expression, ubiquitous.

Its subcellular location is the nucleus. Its function is as follows. Plays a role in pre-mRNA splicing as component of the U4/U6-U5 tri-snRNP complex that is involved in spliceosome assembly, and as component of the precatalytic spliceosome (spliceosome B complex). The heptameric LSM2-8 complex binds specifically to the 3'-terminal U-tract of U6 snRNA. This chain is U6 snRNA-associated Sm-like protein LSm4 (Lsm4), found in Mus musculus (Mouse).